The following is a 284-amino-acid chain: Acetyl-coenzyme A carboxylase carboxyl transferase subunit beta (284 aa).

Positions 24 to 284 constitute a CoA carboxyltransferase N-terminal domain; that stretch reads GLWYKSPTGK…LDLILNNEVR (261 aa).

It belongs to the AccD/PCCB family. In terms of assembly, acetyl-CoA carboxylase is a heterohexamer composed of biotin carboxyl carrier protein (AccB), biotin carboxylase (AccC) and two subunits each of ACCase subunit alpha (AccA) and ACCase subunit beta (AccD).

It is found in the cytoplasm. It carries out the reaction N(6)-carboxybiotinyl-L-lysyl-[protein] + acetyl-CoA = N(6)-biotinyl-L-lysyl-[protein] + malonyl-CoA. The protein operates within lipid metabolism; malonyl-CoA biosynthesis; malonyl-CoA from acetyl-CoA: step 1/1. In terms of biological role, component of the acetyl coenzyme A carboxylase (ACC) complex. Biotin carboxylase (BC) catalyzes the carboxylation of biotin on its carrier protein (BCCP) and then the CO(2) group is transferred by the transcarboxylase to acetyl-CoA to form malonyl-CoA. This is Acetyl-coenzyme A carboxylase carboxyl transferase subunit beta from Flavobacterium psychrophilum (strain ATCC 49511 / DSM 21280 / CIP 103535 / JIP02/86).